The chain runs to 440 residues: Trigger factor (440 aa).

The region spanning 163-248 is the PPIase FKBP-type domain; the sequence is GEIVSVTFEA…VHVIKERTLP (86 aa).

This sequence belongs to the FKBP-type PPIase family. Tig subfamily.

It is found in the cytoplasm. The catalysed reaction is [protein]-peptidylproline (omega=180) = [protein]-peptidylproline (omega=0). In terms of biological role, involved in protein export. Acts as a chaperone by maintaining the newly synthesized protein in an open conformation. Functions as a peptidyl-prolyl cis-trans isomerase. In Solidesulfovibrio magneticus (strain ATCC 700980 / DSM 13731 / RS-1) (Desulfovibrio magneticus), this protein is Trigger factor.